The chain runs to 54 residues: Ovomucoid (54 aa).

Residues 4 to 54 (VDCSDYPKPVCSLEYMPLCGSDSKTYSNKCDFCNAFVDSNGTLSLSHFGKC) form the Kazal-like domain. Intrachain disulfides connect C6/C36, C14/C33, and C22/C54. N43 is a glycosylation site (N-linked (GlcNAc...) asparagine).

Its subcellular location is the secreted. This chain is Ovomucoid, found in Circus aeruginosus (Western marsh harrier).